Consider the following 902-residue polypeptide: Protein translocase subunit SecA (902 aa).

ATP is bound by residues glutamine 89, 107–111 (GEGKT), and aspartate 502. The Zn(2+) site is built by cysteine 884, cysteine 886, cysteine 895, and histidine 896.

It belongs to the SecA family. As to quaternary structure, monomer and homodimer. Part of the essential Sec protein translocation apparatus which comprises SecA, SecYEG and auxiliary proteins SecDF-YajC and YidC. Requires Zn(2+) as cofactor.

It is found in the cell inner membrane. It localises to the cytoplasm. The catalysed reaction is ATP + H2O + cellular proteinSide 1 = ADP + phosphate + cellular proteinSide 2.. Part of the Sec protein translocase complex. Interacts with the SecYEG preprotein conducting channel. Has a central role in coupling the hydrolysis of ATP to the transfer of proteins into and across the cell membrane, serving both as a receptor for the preprotein-SecB complex and as an ATP-driven molecular motor driving the stepwise translocation of polypeptide chains across the membrane. The protein is Protein translocase subunit SecA of Agrobacterium fabrum (strain C58 / ATCC 33970) (Agrobacterium tumefaciens (strain C58)).